The following is a 528-amino-acid chain: MAGSDTAPFLSQADDPDDGPAPGHPGLPGPMGNPKSGELEVPDCEGLQRITGLSRGHSTLIVVVLCYINLLNYMDRFTVAGVLTDIEQFFNIGDGSTGLIQTVFISSYMVLAPVFGYLGDRYNRKYLMCGGIAFWSLVTLGSSFIPREHFWLLLLTRGLVGVGEASYSTIAPTLIADLFVADQRSRMLSIFYFAIPVGSGLGYIAGSKVKDVAGDWHWALRVTPGLGVLAVLLLFLVVQEPPRGAVERHSGSPPLSPTSWWADLKALARNPSFVLSSLGFTSVAFVTGSLALWAPAFLLRSRVVLGETPPCLPGDSCSSSDSLIFGLITCLTGVLGVGLGVEISRRLRRFNPRADPLVCAAGLLGSAPFLFLALACARGSIVATYIFIFIGETLLSMNWAIVADILLYVVIPTRRSTAEAFQIVLSHLLGDAGSPYLIGLISDRLRRSWPPSFLSEFRALQFSLMLCAFVGALGGAAFLGTAMFIEDDRRRAQLHVQGLLHESGPSDDRIVVPQRGRSTRVPVSSVLI.

Residues 1 to 38 (MAGSDTAPFLSQADDPDDGPAPGHPGLPGPMGNPKSGE) form a disordered region. Ala-2 carries the N-acetylalanine modification. The next 12 membrane-spanning stretches (helical) occupy residues 60–80 (LIVV…FTVA), 98–118 (GLIQ…FGYL), 126–146 (YLMC…SFIP), 160–180 (VGVG…DLFV), 187–207 (MLSI…IAGS), 218–238 (WALR…FLVV), 278–298 (LGFT…PAFL), 323–343 (LIFG…GVEI), 357–377 (LVCA…LACA), 381–401 (IVAT…NWAI), 421–441 (FQIV…IGLI), and 465–485 (MLCA…AMFI). Ser-518 is subject to Phosphoserine.

The protein belongs to the major facilitator superfamily. Spinster (TC 2.A.1.49) family. In terms of assembly, interacts with BCL2 and BCL2L1. Expressed in liver (at mRNA and protein levels).

The protein resides in the lysosome membrane. It carries out the reaction a 1-acyl-sn-glycero-3-phosphocholine(out) + H(+)(out) = a 1-acyl-sn-glycero-3-phosphocholine(in) + H(+)(in). It catalyses the reaction 1-hexadecanoyl-sn-glycero-3-phosphocholine(out) + H(+)(out) = 1-hexadecanoyl-sn-glycero-3-phosphocholine(in) + H(+)(in). The enzyme catalyses 1-(9Z-octadecenoyl)-sn-glycero-3-phosphocholine(out) + H(+)(out) = 1-(9Z-octadecenoyl)-sn-glycero-3-phosphocholine(in) + H(+)(in). The catalysed reaction is 1-(5Z,8Z,11Z,14Z-eicosatetraenoyl)-sn-glycero-3-phosphocholine(out) + H(+)(out) = 1-(5Z,8Z,11Z,14Z-eicosatetraenoyl)-sn-glycero-3-phosphocholine(in) + H(+)(in). It carries out the reaction 1-(4Z,7Z,10Z,13Z,16Z,19Z-docosahexaenoyl)-sn-glycero-3-phosphocholine(out) + H(+)(out) = 1-(4Z,7Z,10Z,13Z,16Z,19Z-docosahexaenoyl)-sn-glycero-3-phosphocholine(in) + H(+)(in). It catalyses the reaction a 1-acyl-sn-glycero-3-phosphoethanolamine(out) + H(+)(out) = a 1-acyl-sn-glycero-3-phosphoethanolamine(in) + H(+)(in). The enzyme catalyses 1-(9Z-octadecenoyl)-sn-glycero-3-phosphoethanolamine(out) + H(+)(out) = 1-(9Z-octadecenoyl)-sn-glycero-3-phosphoethanolamine(in) + H(+)(in). The catalysed reaction is 1-acyl-sn-glycero-3-phospho-(1'-sn-glycerol)(out) + H(+)(out) = 1-acyl-sn-glycero-3-phospho-(1'-sn-glycerol)(in) + H(+)(in). It carries out the reaction 1-(9Z-octadecenoyl)-sn-glycero-3-phospho-(1'-sn-glycerol)(out) + H(+)(out) = 1-(9Z-octadecenoyl)-sn-glycero-3-phospho-(1'-sn-glycerol)(in) + H(+)(in). It catalyses the reaction a 1-O-(1Z-alkenyl)-sn-glycero-3-phosphocholine(out) + H(+)(out) = a 1-O-(1Z-alkenyl)-sn-glycero-3-phosphocholine(in) + H(+)(in). The enzyme catalyses 1-(1Z-hexadecenyl)-sn-glycero-3-phosphocholine(out) + H(+)(out) = 1-(1Z-hexadecenyl)-sn-glycero-3-phosphocholine(in) + H(+)(in). The catalysed reaction is a 1-O-(1Z-alkenyl)-sn-glycero-3-phosphoethanolamine(out) + H(+)(out) = a 1-O-(1Z-alkenyl)-sn-glycero-3-phosphoethanolamine(in) + H(+)(in). It carries out the reaction 1-O-(1Z-hexadecenyl)-sn-glycero-3-phosphoethanolamine(out) + H(+)(out) = 1-O-(1Z-hexadecenyl)-sn-glycero-3-phosphoethanolamine(in) + H(+)(in). Plays a critical role in the phospholipid salvage pathway from lysosomes to the cytosol. Mediates the rate-limiting, proton-dependent, lysosomal efflux of lysophospholipids, which can then be reacylated by acyltransferases in the endoplasmic reticulum to form phospholipids. Selective for zwitterionic headgroups such as lysophosphatidylcholine (LPC) and lysophosphatidylethanolamine (LPE), can also transport lysophosphatidylglycerol (LPG), but not other anionic lysophospholipids, sphingosine, nor sphingomyelin. Transports lysophospholipids with saturated, monounsaturated, and polyunsaturated fatty acids, such as 1-hexadecanoyl-sn-glycero-3-phosphocholine, 1-(9Z-octadecenoyl)-sn-glycero-3-phosphocholine and 1-(4Z,7Z,10Z,13Z,16Z,19Z-docosahexaenoyl)-sn-glycero-3-phosphocholine, respectively. Can also transport lysoplasmalogen (LPC with a fatty alcohol) such as 1-(1Z-hexadecenyl)-sn-glycero-3-phosphocholine. Essential player in lysosomal homeostasis. Crucial for cell survival under conditions of nutrient limitation. May be involved in necrotic or autophagic cell death. In Mus musculus (Mouse), this protein is Protein spinster homolog 1 (Spns1).